The chain runs to 138 residues: Small ribosomal subunit protein uS11c (138 aa).

Residues 1-22 (MTKPIPRIGSRRNGRIGSRKNA) form a disordered region. Positions 9–22 (GSRRNGRIGSRKNA) are enriched in basic residues.

The protein belongs to the universal ribosomal protein uS11 family. Part of the 30S ribosomal subunit.

Its subcellular location is the plastid. It is found in the chloroplast. This chain is Small ribosomal subunit protein uS11c, found in Dioscorea elephantipes (Elephant's foot yam).